A 187-amino-acid chain; its full sequence is Putative carbonic anhydrase YtiB (187 aa).

Positions 38, 40, 96, and 99 each coordinate Zn(2+).

Belongs to the beta-class carbonic anhydrase family. It depends on Zn(2+) as a cofactor.

It carries out the reaction hydrogencarbonate + H(+) = CO2 + H2O. In terms of biological role, reversible hydration of carbon dioxide. In Bacillus subtilis (strain 168), this protein is Putative carbonic anhydrase YtiB (ytiB).